Here is a 396-residue protein sequence, read N- to C-terminus: Beta-1,3-N-acetylglucosaminyltransferase radical fringe (396 aa).

Residues 1 to 6 (MNFSCL) lie on the Cytoplasmic side of the membrane. A helical; Signal-anchor for type II membrane protein transmembrane segment spans residues 7 to 27 (GLSKICFLVSVIFCTFLLLFI). Topologically, residues 28 to 396 (PKTKTPWRPR…THWCPPRKTR (369 aa)) are lumenal. N-linked (GlcNAc...) asparagine glycosylation is found at Asn-49 and Asn-120. Arg-145 contacts substrate. N-linked (GlcNAc...) asparagine glycosylation is present at Asn-184. Disulfide bonds link Cys-185/Cys-196 and Cys-214/Cys-277. Residue Asp-218 coordinates substrate. Asp-219 is a binding site for Mn(2+). The active site involves Asp-307. His-331 is a Mn(2+) binding site. A disulfide bridge links Cys-381 with Cys-390.

It belongs to the glycosyltransferase 31 family. Requires Mn(2+) as cofactor. In terms of tissue distribution, detected in the mesanchymal region of the developing limb. Expressed in mesoderm but not in ectoderm with no evident boundary of expression.

The protein localises to the golgi apparatus membrane. The catalysed reaction is 3-O-(alpha-L-fucosyl)-L-threonyl-[EGF-like domain protein] + UDP-N-acetyl-alpha-D-glucosamine = 3-O-(N-acetyl-beta-D-glucosaminyl-(1-&gt;3)-alpha-L-fucosyl)-L-threonyl-[EGF-like domain protein] + UDP + H(+). It carries out the reaction 3-O-(alpha-L-fucosyl)-L-seryl-[EGF-like domain protein] + UDP-N-acetyl-alpha-D-glucosamine = 3-O-(N-acetyl-beta-D-glucosaminyl-(1-&gt;3)-alpha-L-fucosyl)-L-seryl-[EGF-like domain protein] + UDP + H(+). Its function is as follows. Glycosyltransferase that initiates the elongation of O-linked fucose residues attached to EGF-like repeats in the extracellular domain of Notch molecules. Involved in forelimb development and in adult forelimb regeneration. The polypeptide is Beta-1,3-N-acetylglucosaminyltransferase radical fringe (RFNG) (Notophthalmus viridescens (Eastern newt)).